Consider the following 914-residue polypeptide: MVSLLKKLIGSRNDRLLKQYRKLVTQINALESKTAALSDQELAAKTQEFRTRHAEGSSLDDLLPEAFAVVREAGKRVFGMRHFDVQMLGGIALHNGKIAEMRTGEGKTLMATLPVYLNAIAGRGVHVVTVNDYLARRDAEWMGRLYRFLGMSTGVVVPQQPNDEKIAAYAADITYGTNNEFGFDYLRDNMEYRVEDRRQRALAYAIVDEVDSILIDEARTPLIISGQAEDHTELYVRMNAVPPLLTRMASEPKPHEPEPEGDYWVDEKSQQVFLSERGHENAERILSQQGILPEGESLYDPRHIALMHHLMVALRANTLFFRDQQYVVQDGEVVIVDEFTGRLMVGRRWSDGLHQAVEAKEGVKIQHENQTLASITFQNYFRMYDKLSGMTGTADTEAYEFQEIYNLETVIIPTNKPMIRKDQNDQVFKTAQEKYNAILNDIRDCHERGQPVLVGTTSIENSELLSGLLKQAKLPHEVLNAKQHAREAEIVAEAGKPGHITIATNMAGRGTDIVLGGSVDKQVDLIRADESLSEAEKEARIEKVRADWKPANEQVKAAGGLRIIGTERHESRRIDNQLRGRAGRQGDPGSSRFYLSLEDPLMRIFAGDRVRGIMERLKLPEGEPIEAGMVTRSIETAQRKVEGRNFDIRKQLLEYDDVANDQRKVLYAQRNEVLEASSIRPSVEALCEGAATDLVRQHIPADSVEEQWDVPALEQALAADWQIHLSLSDMLEKESSLTDDDILERVLEAVRGVYTGKIALVGEEAWAQFERSIMLQAIDTHWREHLSALDYLRQGIHLRGYAQKNPKQEYKREAFELFSGMLDRIRDDVVRVLLTVRVQSAEQVEQAAEAEASQPHVQNVQYHHSDYDEALAGTDADAQPAQQPVRNFMPKVGRNDPCPCGSGKKYKHCHGKLA.

ATP is bound by residues glutamine 86, 104-108 (GEGKT), and aspartate 512. Zn(2+) is bound by residues cysteine 898, cysteine 900, cysteine 909, and histidine 910.

This sequence belongs to the SecA family. Monomer and homodimer. Part of the essential Sec protein translocation apparatus which comprises SecA, SecYEG and auxiliary proteins SecDF-YajC and YidC. Requires Zn(2+) as cofactor.

It is found in the cell inner membrane. The protein localises to the cytoplasm. It catalyses the reaction ATP + H2O + cellular proteinSide 1 = ADP + phosphate + cellular proteinSide 2.. Functionally, part of the Sec protein translocase complex. Interacts with the SecYEG preprotein conducting channel. Has a central role in coupling the hydrolysis of ATP to the transfer of proteins into and across the cell membrane, serving both as a receptor for the preprotein-SecB complex and as an ATP-driven molecular motor driving the stepwise translocation of polypeptide chains across the membrane. In Bordetella petrii (strain ATCC BAA-461 / DSM 12804 / CCUG 43448), this protein is Protein translocase subunit SecA.